The following is a 245-amino-acid chain: PF03932 family protein CutC (245 aa).

It belongs to the CutC family.

The protein resides in the cytoplasm. The sequence is that of PF03932 family protein CutC from Sinorhizobium medicae (strain WSM419) (Ensifer medicae).